Here is a 294-residue protein sequence, read N- to C-terminus: Small ribosomal subunit protein uS2 (294 aa).

A compositionally biased stretch (basic and acidic residues) spans 256-274 (SGKFIMDEDPDSKKTKTAE). Residues 256-294 (SGKFIMDEDPDSKKTKTAEEPSATIEPSTTTTVEVDQNE) are disordered. Polar residues predominate over residues 280–294 (IEPSTTTTVEVDQNE).

The protein belongs to the universal ribosomal protein uS2 family.

This Leptospira interrogans serogroup Icterohaemorrhagiae serovar Lai (strain 56601) protein is Small ribosomal subunit protein uS2.